A 155-amino-acid polypeptide reads, in one-letter code: Small ribosomal subunit protein uS7 (155 aa).

The protein belongs to the universal ribosomal protein uS7 family. In terms of assembly, part of the 30S ribosomal subunit. Contacts proteins S9 and S11.

Functionally, one of the primary rRNA binding proteins, it binds directly to 16S rRNA where it nucleates assembly of the head domain of the 30S subunit. Is located at the subunit interface close to the decoding center, probably blocks exit of the E-site tRNA. The polypeptide is Small ribosomal subunit protein uS7 (Thermotoga maritima (strain ATCC 43589 / DSM 3109 / JCM 10099 / NBRC 100826 / MSB8)).